Here is a 612-residue protein sequence, read N- to C-terminus: Kelch repeat and BTB domain-containing protein 3 (612 aa).

One can recognise a BTB domain in the interval 52-119; sequence YDFKIIMKDE…AYTGKTKITD (68 aa). In terms of domain architecture, BACK spans 154–254; the sequence is CLQLLSISDS…QLSEETLQDC (101 aa). 5 Kelch repeats span residues 295–341, 343–403, 404–454, 456–506, and 552–599; these read KYIF…SSYG, KIFL…MALD, RLFV…TCQN, IYVL…KAVP, and KIYI…VIQF.

This chain is Kelch repeat and BTB domain-containing protein 3, found in Homo sapiens (Human).